We begin with the raw amino-acid sequence, 180 residues long: V-type proton ATPase subunit c''1 (180 aa).

Residues M1–S26 are Lumenal-facing. The helical transmembrane segment at A27–I47 threads the bilayer. At T48 to N66 the chain is on the cytoplasmic side. The helical transmembrane segment at L67–L87 threads the bilayer. Over Q88–A110 the chain is Lumenal. The chain crosses the membrane as a helical span at residues I111–I131. The Cytoplasmic segment spans residues I132–K149. Residues I150–I170 traverse the membrane as a helical segment. Topologically, residues M171–K180 are lumenal.

This sequence belongs to the V-ATPase proteolipid subunit family. In terms of assembly, V-ATPase is a heteromultimeric enzyme composed of a peripheral catalytic V1 complex (components A to H) attached to an integral membrane V0 proton pore complex (components: a, c, c'', d and e). The proteolipid components c and c'' are present as a hexameric ring that forms the proton-conducting pore. Preferentially expressed in roots.

Its subcellular location is the endoplasmic reticulum membrane. It is found in the golgi apparatus membrane. In terms of biological role, proton-conducting pore forming subunit of the membrane integral V0 complex of vacuolar ATPase. V-ATPase is responsible for acidifying a variety of intracellular compartments in eukaryotic cells. This Arabidopsis thaliana (Mouse-ear cress) protein is V-type proton ATPase subunit c''1 (VHA-c''1).